The primary structure comprises 309 residues: Porphobilinogen deaminase (309 aa).

Position 242 is an S-(dipyrrolylmethanemethyl)cysteine (Cys-242).

Belongs to the HMBS family. As to quaternary structure, monomer. Dipyrromethane is required as a cofactor.

It carries out the reaction 4 porphobilinogen + H2O = hydroxymethylbilane + 4 NH4(+). It functions in the pathway porphyrin-containing compound metabolism; protoporphyrin-IX biosynthesis; coproporphyrinogen-III from 5-aminolevulinate: step 2/4. Its function is as follows. Tetrapolymerization of the monopyrrole PBG into the hydroxymethylbilane pre-uroporphyrinogen in several discrete steps. This chain is Porphobilinogen deaminase, found in Actinobacillus succinogenes (strain ATCC 55618 / DSM 22257 / CCUG 43843 / 130Z).